The sequence spans 1163 residues: Guanylate cyclase 32E (1163 aa).

Residues 1–25 (MPGPCASAAAFSCILVLLLLGCQRS) form the signal peptide. At 29–469 (AAGATVSSMR…LCPRKKLDWR (441 aa)) the chain is on the extracellular side. 4 N-linked (GlcNAc...) asparagine glycosylation sites follow: asparagine 147, asparagine 206, asparagine 368, and asparagine 390. The chain crosses the membrane as a helical span at residues 470–490 (YLVSGPLCALVVVVAIALLIK). The Cytoplasmic portion of the chain corresponds to 491–1163 (HYRYEQTLAG…RSAPSITFRL (673 aa)). Positions 507–800 (MKDVTVINLG…IRLVRMHLKE (294 aa)) constitute a Protein kinase domain. In terms of domain architecture, Guanylate cyclase spans 873-1003 (TILFSDIVGF…DTVNTASRME (131 aa)).

It belongs to the adenylyl cyclase class-4/guanylyl cyclase family.

The protein localises to the membrane. It carries out the reaction GTP = 3',5'-cyclic GMP + diphosphate. This is Guanylate cyclase 32E (Gyc32E) from Drosophila melanogaster (Fruit fly).